The sequence spans 261 residues: Cyclin-J18-like (261 aa).

Belongs to the cyclin family.

This chain is Cyclin-J18-like, found in Oryza sativa subsp. japonica (Rice).